Consider the following 350-residue polypeptide: Uroporphyrinogen decarboxylase (350 aa).

Residues 28-32, F47, D78, Y155, S210, and H325 contribute to the substrate site; that span reads RQAGR.

The protein belongs to the uroporphyrinogen decarboxylase family. In terms of assembly, homodimer.

Its subcellular location is the cytoplasm. The enzyme catalyses uroporphyrinogen III + 4 H(+) = coproporphyrinogen III + 4 CO2. The protein operates within porphyrin-containing compound metabolism; protoporphyrin-IX biosynthesis; coproporphyrinogen-III from 5-aminolevulinate: step 4/4. Catalyzes the decarboxylation of four acetate groups of uroporphyrinogen-III to yield coproporphyrinogen-III. In Nostoc sp. (strain PCC 7120 / SAG 25.82 / UTEX 2576), this protein is Uroporphyrinogen decarboxylase.